A 229-amino-acid polypeptide reads, in one-letter code: Cytidylate kinase (229 aa).

Residue 12 to 20 (GPSGSGKGT) coordinates ATP.

It belongs to the cytidylate kinase family. Type 1 subfamily.

It localises to the cytoplasm. It carries out the reaction CMP + ATP = CDP + ADP. The enzyme catalyses dCMP + ATP = dCDP + ADP. This chain is Cytidylate kinase, found in Stutzerimonas stutzeri (strain A1501) (Pseudomonas stutzeri).